Consider the following 540-residue polypeptide: CTP synthase (540 aa).

The interval 1–267 (MTKYIFVTGG…DQKVCDFLHL (267 aa)) is amidoligase domain. S13 lines the CTP pocket. A UTP-binding site is contributed by S13. ATP is bound at residue 14 to 19 (SLGKGI). Residue Y54 coordinates L-glutamine. Position 71 (D71) interacts with ATP. Mg(2+) is bound by residues D71 and E141. Residues 148–150 (DIE), 188–193 (KTKPTQ), and K224 contribute to the CTP site. UTP-binding positions include 188–193 (KTKPTQ) and K224. The 244-residue stretch at 294 to 537 (TITLVGKYVE…IGAASGLPAQ (244 aa)) folds into the Glutamine amidotransferase type-1 domain. G356 serves as a coordination point for L-glutamine. The active-site Nucleophile; for glutamine hydrolysis is C383. Residues 384–387 (LGMQ), E407, and R465 contribute to the L-glutamine site. Catalysis depends on residues H510 and E512.

It belongs to the CTP synthase family. In terms of assembly, homotetramer.

The enzyme catalyses UTP + L-glutamine + ATP + H2O = CTP + L-glutamate + ADP + phosphate + 2 H(+). It carries out the reaction L-glutamine + H2O = L-glutamate + NH4(+). It catalyses the reaction UTP + NH4(+) + ATP = CTP + ADP + phosphate + 2 H(+). It participates in pyrimidine metabolism; CTP biosynthesis via de novo pathway; CTP from UDP: step 2/2. Its activity is regulated as follows. Allosterically activated by GTP, when glutamine is the substrate; GTP has no effect on the reaction when ammonia is the substrate. The allosteric effector GTP functions by stabilizing the protein conformation that binds the tetrahedral intermediate(s) formed during glutamine hydrolysis. Inhibited by the product CTP, via allosteric rather than competitive inhibition. Functionally, catalyzes the ATP-dependent amination of UTP to CTP with either L-glutamine or ammonia as the source of nitrogen. Regulates intracellular CTP levels through interactions with the four ribonucleotide triphosphates. This chain is CTP synthase, found in Lactobacillus johnsonii (strain CNCM I-12250 / La1 / NCC 533).